A 455-amino-acid polypeptide reads, in one-letter code: Probable hexose phosphate transport protein (455 aa).

5 helical membrane-spanning segments follow: residues 34 to 54 (IFYSMFIGYIFYYFTRKSFTF), 70 to 90 (LGIIGSTLYFSYGISKFVSGV), 113 to 133 (IFFGMSSSIVLFALWWGLNGW), 161 to 181 (VWSTSHNIGGALIPILTGFII), and 185 to 205 (GWRGAMYVPGILCIGMGLVLI). Residues 219–242 (PIEKYKRDPHHAHHEGKSASEGTE) are disordered. Transmembrane regions (helical) follow at residues 257–277 (YVLTNQWLWFLAAASFFIYIV), 302–322 (FCVSLFEIGGLFGMLVAGWLS), 331–351 (GPMNVLFSLGLLFAILGMWFS), 363–383 (LLFVIGFFLYGPQMMIGLAAA), 394–414 (ASGFTGWFAYFGATFAGYPLG), and 424–444 (GFFIALLACASIALLLFLPTW).

This sequence belongs to the major facilitator superfamily. Organophosphate:Pi antiporter (OPA) (TC 2.A.1.4) family.

It localises to the cell membrane. Functionally, transport protein for sugar phosphate uptake. The protein is Probable hexose phosphate transport protein (uhpC) of Chlamydia pneumoniae (Chlamydophila pneumoniae).